The chain runs to 50 residues: Fungus-induced protein 3 (50 aa).

This is Fungus-induced protein 3 (fip-3) from Caenorhabditis elegans.